Here is a 35-residue protein sequence, read N- to C-terminus: Coenzyme PQQ synthesis protein A (35 aa).

The pyrroloquinoline quinone (Glu-Tyr) cross-link spans 16 to 20 (EINMY).

Belongs to the PqqA family.

It functions in the pathway cofactor biosynthesis; pyrroloquinoline quinone biosynthesis. Its function is as follows. Required for coenzyme pyrroloquinoline quinone (PQQ) biosynthesis. PQQ is probably formed by cross-linking a specific glutamate to a specific tyrosine residue and excising these residues from the peptide. The protein is Coenzyme PQQ synthesis protein A of Ruegeria pomeroyi (strain ATCC 700808 / DSM 15171 / DSS-3) (Silicibacter pomeroyi).